Reading from the N-terminus, the 147-residue chain is Large ribosomal subunit protein uL22 (147 aa).

The tract at residues 110–147 (EEKKTVAKKAPAAKKTTTTKAPAKKTTSTKKATAKKES) is disordered. Over residues 117–140 (KKAPAAKKTTTTKAPAKKTTSTKK) the composition is skewed to low complexity.

The protein belongs to the universal ribosomal protein uL22 family. As to quaternary structure, part of the 50S ribosomal subunit.

This protein binds specifically to 23S rRNA; its binding is stimulated by other ribosomal proteins, e.g. L4, L17, and L20. It is important during the early stages of 50S assembly. It makes multiple contacts with different domains of the 23S rRNA in the assembled 50S subunit and ribosome. In terms of biological role, the globular domain of the protein is located near the polypeptide exit tunnel on the outside of the subunit, while an extended beta-hairpin is found that lines the wall of the exit tunnel in the center of the 70S ribosome. The chain is Large ribosomal subunit protein uL22 from Campylobacter jejuni subsp. jejuni serotype O:6 (strain 81116 / NCTC 11828).